The chain runs to 419 residues: Putative trans-acting enoyl reductase MT2525 (419 aa).

Lysine 127 is covalently cross-linked (Isoglutamyl lysine isopeptide (Lys-Gln) (interchain with Q-Cter in protein Pup)). The segment at 197 to 232 is disordered; it reads NDPDARRQLSDPYMLSPDRGAEPELGPQPDLPSRRG. A helical transmembrane segment spans residues 284–304; sequence VLAPVVSVVGGGVGNAMFGLA.

This sequence belongs to the saccharopine dehydrogenase family. Enoyl reductase subfamily.

It localises to the cell membrane. This is Putative trans-acting enoyl reductase MT2525 from Mycobacterium tuberculosis (strain CDC 1551 / Oshkosh).